The sequence spans 234 residues: 2-amino-5-formylamino-6-ribosylaminopyrimidin-4(3H)-one 5'-monophosphate deformylase (234 aa).

Fe cation is bound by residues glutamate 29, histidine 31, aspartate 40, and histidine 109.

This sequence belongs to the creatininase superfamily. FAPy deformylase family. As to quaternary structure, homodimer. The cofactor is Fe(2+). Zn(2+) is required as a cofactor.

The catalysed reaction is 2-amino-5-formylamino-6-(5-phospho-D-ribosylamino)pyrimidin-4(3H)-one + H2O = 2,5-diamino-6-(1-D-ribosylamino)pyrimidin-4(3H)-one 5'-phosphate + formate + H(+). It functions in the pathway cofactor biosynthesis; coenzyme F420 biosynthesis. Its pathway is cofactor biosynthesis; riboflavin biosynthesis. In terms of biological role, catalyzes the hydrolysis of the formamide of 2-amino-5-formylamino-6-ribosylamino-4(3H)-pyrimidinone 5'-monophosphate (FAPy) to form 2,5-diamino-6-ribosylamino-4(3H)-pyrimidinone 5'-phosphate (APy). The protein is 2-amino-5-formylamino-6-ribosylaminopyrimidin-4(3H)-one 5'-monophosphate deformylase of Methanobrevibacter ruminantium (strain ATCC 35063 / DSM 1093 / JCM 13430 / OCM 146 / M1) (Methanobacterium ruminantium).